The chain runs to 92 residues: Small ribosomal subunit protein uS19 (92 aa).

Belongs to the universal ribosomal protein uS19 family.

In terms of biological role, protein S19 forms a complex with S13 that binds strongly to the 16S ribosomal RNA. The chain is Small ribosomal subunit protein uS19 from Rickettsia africae (strain ESF-5).